Consider the following 217-residue polypeptide: 3,4-dihydroxy-2-butanone 4-phosphate synthase (217 aa).

Residues 37–38 (RE), D42, 150–154 (RRGHT), and E174 each bind D-ribulose 5-phosphate. Residue E38 participates in Mg(2+) binding. H153 contacts Mg(2+).

This sequence belongs to the DHBP synthase family. In terms of assembly, homodimer. Mg(2+) is required as a cofactor. Requires Mn(2+) as cofactor.

It catalyses the reaction D-ribulose 5-phosphate = (2S)-2-hydroxy-3-oxobutyl phosphate + formate + H(+). The protein operates within cofactor biosynthesis; riboflavin biosynthesis; 2-hydroxy-3-oxobutyl phosphate from D-ribulose 5-phosphate: step 1/1. In terms of biological role, catalyzes the conversion of D-ribulose 5-phosphate to formate and 3,4-dihydroxy-2-butanone 4-phosphate. This is 3,4-dihydroxy-2-butanone 4-phosphate synthase from Shewanella sp. (strain MR-4).